The sequence spans 255 residues: Sulfur carrier protein FdhD (255 aa).

Cysteine 103 serves as the catalytic Cysteine persulfide intermediate.

This sequence belongs to the FdhD family.

Its subcellular location is the cytoplasm. Its function is as follows. Required for formate dehydrogenase (FDH) activity. Acts as a sulfur carrier protein that transfers sulfur from IscS to the molybdenum cofactor prior to its insertion into FDH. The sequence is that of Sulfur carrier protein FdhD from Sulfurisphaera tokodaii (strain DSM 16993 / JCM 10545 / NBRC 100140 / 7) (Sulfolobus tokodaii).